Here is a 254-residue protein sequence, read N- to C-terminus: Pyrroloquinoline-quinone synthase (254 aa).

The protein belongs to the PqqC family.

The enzyme catalyses 6-(2-amino-2-carboxyethyl)-7,8-dioxo-1,2,3,4,7,8-hexahydroquinoline-2,4-dicarboxylate + 3 O2 = pyrroloquinoline quinone + 2 H2O2 + 2 H2O + H(+). Its pathway is cofactor biosynthesis; pyrroloquinoline quinone biosynthesis. In terms of biological role, ring cyclization and eight-electron oxidation of 3a-(2-amino-2-carboxyethyl)-4,5-dioxo-4,5,6,7,8,9-hexahydroquinoline-7,9-dicarboxylic-acid to PQQ. This is Pyrroloquinoline-quinone synthase from Rhodopseudomonas palustris (strain TIE-1).